A 125-amino-acid chain; its full sequence is Small ribosomal subunit protein uS13 (125 aa).

Positions 95-125 are disordered; it reads GLPVNGQRTRTNARTRKGGKKTVANKKKVTK. The segment covering 105 to 125 has biased composition (basic residues); the sequence is TNARTRKGGKKTVANKKKVTK.

This sequence belongs to the universal ribosomal protein uS13 family. Part of the 30S ribosomal subunit. Forms a loose heterodimer with protein S19. Forms two bridges to the 50S subunit in the 70S ribosome.

Its function is as follows. Located at the top of the head of the 30S subunit, it contacts several helices of the 16S rRNA. In the 70S ribosome it contacts the 23S rRNA (bridge B1a) and protein L5 of the 50S subunit (bridge B1b), connecting the 2 subunits; these bridges are implicated in subunit movement. Contacts the tRNAs in the A and P-sites. This Leptospira borgpetersenii serovar Hardjo-bovis (strain L550) protein is Small ribosomal subunit protein uS13.